Consider the following 479-residue polypeptide: Ribulose bisphosphate carboxylase large chain (479 aa).

Residues 1 to 2 constitute a propeptide that is removed on maturation; it reads MS. N-acetylproline is present on Pro3. Residues Thr65, Asn123, 173 to 177, and 201 to 204 contribute to the substrate site; these read TIKPK and KDDE. The active-site Proton acceptor is Lys175. Positions 201, 203, and 204 each coordinate Mg(2+). Lys201 is modified (N6-carboxylysine). Ser208 carries the post-translational modification Phosphoserine. The active-site Proton acceptor is His294. Residues 294-295 and His327 contribute to the substrate site; that span reads HR. Thr330 bears the Phosphothreonine mark. Substrate is bound by residues Lys334 and 379 to 381; that span reads SGG.

The protein belongs to the RuBisCO large chain family. Type I subfamily. Heterohexadecamer of 8 large chains and 8 small chains; disulfide-linked. The disulfide link is formed within the large subunit homodimers. Interacts with RBCX1 and RBCX1. An intermediate complex made of eight RbcL subunits interacts with the chaperone BSD2. It depends on Mg(2+) as a cofactor. Post-translationally, the disulfide bond which can form in the large chain dimeric partners within the hexadecamer appears to be associated with oxidative stress and protein turnover.

It is found in the plastid. It localises to the chloroplast. It carries out the reaction 2 (2R)-3-phosphoglycerate + 2 H(+) = D-ribulose 1,5-bisphosphate + CO2 + H2O. It catalyses the reaction D-ribulose 1,5-bisphosphate + O2 = 2-phosphoglycolate + (2R)-3-phosphoglycerate + 2 H(+). Its function is as follows. RuBisCO catalyzes two reactions: the carboxylation of D-ribulose 1,5-bisphosphate, the primary event in carbon dioxide fixation, as well as the oxidative fragmentation of the pentose substrate in the photorespiration process. Both reactions occur simultaneously and in competition at the same active site. Binds to abscisic acid (ABA). In Arabidopsis thaliana (Mouse-ear cress), this protein is Ribulose bisphosphate carboxylase large chain.